The sequence spans 96 residues: Neutrophil defensin 1 (96 aa).

The signal sequence occupies residues 1-19 (MRTLVILAAILLVALQAQA). The propeptide occupies 20 to 66 (EPLQARTDEATAAQEQIPTDNPEVVVSLAWDESLAPKDSVPGLRKNM). 3 disulfides stabilise this stretch: C68–C96, C70–C85, and C75–C95. Y87 bears the Phosphotyrosine mark.

As to quaternary structure, tetramer. Dimer. Interacts with RETN. ADP-ribosylation drastically reduces cytotoxic and antibacterial activities, and enhances IL8 production.

It is found in the secreted. Its function is as follows. Effector molecule of the innate immune system that acts via antibiotic-like properties against a broad array of infectious agents including bacteria, fungi, and viruses or by promoting the activation and maturation of some APCs. Interacts with the essential precursor of cell wall synthesis lipid II to inhibit bacterial cell wall synthesis. Inhibits adenovirus infection via inhibition of viral disassembly at the vertex region, thereby restricting the release of internal capsid protein pVI, which is required for endosomal membrane penetration during cell entry. In addition, interaction with adenovirus capsid leads to the redirection of viral particles to TLR4 thereby promoting a NLRP3-mediated inflammasome response and interleukin 1-beta (IL-1beta) release. Induces the production of proinflammatory cytokines including type I interferon (IFN) in plasmacytoid dendritic cells (pDCs) by triggering the degradation of NFKBIA and nuclear translocation of IRF1, both of which are required for activation of pDCs. This Macaca mulatta (Rhesus macaque) protein is Neutrophil defensin 1.